We begin with the raw amino-acid sequence, 219 residues long: Thymidylate kinase (219 aa).

7 to 14 (GIDGAGKS) contributes to the ATP binding site.

The protein belongs to the thymidylate kinase family.

The catalysed reaction is dTMP + ATP = dTDP + ADP. Functionally, phosphorylation of dTMP to form dTDP in both de novo and salvage pathways of dTTP synthesis. This is Thymidylate kinase from Chlorobium phaeobacteroides (strain DSM 266 / SMG 266 / 2430).